A 384-amino-acid polypeptide reads, in one-letter code: Outer membrane protein assembly factor BamB (384 aa).

The N-terminal stretch at 1-21 (MKLTLKRKFIAVLALTSLLGA) is a signal peptide. Cysteine 22 carries the N-palmitoyl cysteine lipid modification. The S-diacylglycerol cysteine moiety is linked to residue cysteine 22.

Belongs to the BamB family. Part of the Bam complex.

The protein resides in the cell outer membrane. Part of the outer membrane protein assembly complex, which is involved in assembly and insertion of beta-barrel proteins into the outer membrane. This chain is Outer membrane protein assembly factor BamB, found in Taylorella asinigenitalis (strain MCE3).